The following is a 537-amino-acid chain: Putative cysteine ligase BshC (537 aa).

Positions 422–450 form a coiled coil; that stretch reads IEKVEGMIEQQRRLNKDLLDEVAGNQNNI.

The protein belongs to the BshC family.

Its function is as follows. Involved in bacillithiol (BSH) biosynthesis. May catalyze the last step of the pathway, the addition of cysteine to glucosamine malate (GlcN-Mal) to generate BSH. The polypeptide is Putative cysteine ligase BshC (Staphylococcus aureus (strain COL)).